Reading from the N-terminus, the 126-residue chain is MILGIGIDIIEIIRIKNAIERNSKFMKRVFTEKEIKYFEKINFRHESIAGRFAAKEAIVKALGTGFRNMKITDIEVINDKVGKPLVELKGGALEKIKVYKDVKIHLSISHNRDNAIAYSIIEGECI.

D8 and E56 together coordinate Mg(2+).

It belongs to the P-Pant transferase superfamily. AcpS family. The cofactor is Mg(2+).

The protein resides in the cytoplasm. The enzyme catalyses apo-[ACP] + CoA = holo-[ACP] + adenosine 3',5'-bisphosphate + H(+). Transfers the 4'-phosphopantetheine moiety from coenzyme A to a Ser of acyl-carrier-protein. The chain is Holo-[acyl-carrier-protein] synthase from Clostridium tetani (strain Massachusetts / E88).